A 258-amino-acid polypeptide reads, in one-letter code: Indole-3-glycerol phosphate synthase (258 aa).

The protein belongs to the TrpC family.

It catalyses the reaction 1-(2-carboxyphenylamino)-1-deoxy-D-ribulose 5-phosphate + H(+) = (1S,2R)-1-C-(indol-3-yl)glycerol 3-phosphate + CO2 + H2O. It participates in amino-acid biosynthesis; L-tryptophan biosynthesis; L-tryptophan from chorismate: step 4/5. This chain is Indole-3-glycerol phosphate synthase, found in Geobacillus sp. (strain WCH70).